The sequence spans 114 residues: Macrophage migration inhibitory factor homolog (114 aa).

Pro-2 serves as the catalytic Proton acceptor; via imino nitrogen. The substrate site is built by Lys-33 and Ile-65.

The protein belongs to the MIF family.

Its subcellular location is the secreted. The enzyme catalyses L-dopachrome = 5,6-dihydroxyindole-2-carboxylate. It carries out the reaction 3-phenylpyruvate = enol-phenylpyruvate. Functionally, tautomerization of the methyl ester of L-dopachrome. Inhibits migration of human peripheral blood mononuclear cells. In Trichinella spiralis (Trichina worm), this protein is Macrophage migration inhibitory factor homolog.